Reading from the N-terminus, the 125-residue chain is Cardioactive peptide (125 aa).

The first 22 residues, 1-22 (MTVSRVCLLLLVALVYLDCCYA), serve as a signal peptide directing secretion. Residues 23-42 (ASIPRNFDPRLSEEIVMAPK) constitute a propeptide that is removed on maturation. Residues Cys47 and Cys53 are joined by a disulfide bond. Residue Cys53 is modified to Cysteine amide. Positions 57-125 (RSQGPPGMPA…RRKQKEAYIQ (69 aa)) are excised as a propeptide.

In terms of tissue distribution, abdominal perivisceral organ; major neurohemal release site. Expressed in 116 neurons in post-embryonic central nervous system. Nine pairs of cells are observed in the brain, 4.5 pairs in the subesophageal ganglion, three pairs in each thoracic ganglion (T1-T3), three pairs in the first abdominal ganglion (A1), five pairs each in the second to sixth abdominal ganglia (A2-A6) and 7.5 pairs in the terminal ganglion. Expressed in every ganglion in each post-embryonic stage, except in the thoracic ganglia of first- and second-instar larvae. Colocalizes with CAP2b in median neurosecretory cells during the last larval instar through to adults.

It is found in the secreted. In terms of biological role, cardioregulatory neurohormone that increases heart beat rate during adult wing inflation; has no effect on beat amplitude. The effect of CCAP is both ino- and chronotropic. The protein is Cardioactive peptide of Manduca sexta (Tobacco hawkmoth).